The chain runs to 528 residues: CTD kinase subunit alpha (528 aa).

The segment covering 1–15 (MSYNNGNTYSKSYSR) has biased composition (polar residues). The disordered stretch occupies residues 1-148 (MSYNNGNTYS…NTSNDIKNGY (148 aa)). S14 is subject to Phosphoserine; by autocatalysis. The Nuclear localization signal signature appears at 37 to 44 (PPKRIRTD). Polar residues predominate over residues 45–103 (SGYQSNMDNISSHRVNSNDQPGHTKSRGNNNLSRYNDTSFQTSSRYQGSRYNNNNTSYE). A compositionally biased stretch (basic and acidic residues) spans 104–118 (NRPKSIKRDETKAEF). Residues 134-144 (YNNSSNTSNDI) are compositionally biased toward polar residues. The Protein kinase domain maps to 183–469 (YLRIMQVGEG…ATEALQSDYF (287 aa)). ATP is bound by residues 189 to 197 (VGEGTYGKV) and K212. D306 serves as the catalytic Proton acceptor. At T338 the chain carries Phosphothreonine. The segment at 497 to 528 (QKRPNILSTNTNNKGNGNSNNNNNNNNDDDDK) is disordered. A compositionally biased stretch (low complexity) spans 504–522 (STNTNNKGNGNSNNNNNNN).

It belongs to the protein kinase superfamily. CMGC Ser/Thr protein kinase family. CDC2/CDKX subfamily. CTDK-I consists of three subunits, CTK1, CTK2 and CTK3 (also called alpha, beta and gamma). Interacts directly with the CTK2 and CTK3 subunits, this interaction is required for kinase activity. Interacts with RNA polymerase I. Interacts with SNF1, but only at low glucose concentrations. Interacts with translating ribosomes. Phosphorylated on Thr-338 by CAK1. Phosphorylation is essential for the elevated CTD Ser-2 phosphorylation and required to activate transcription of stationary-phase genes during the diauxic shift.

It localises to the nucleus. The protein resides in the nucleolus. The protein localises to the cytoplasm. It carries out the reaction [DNA-directed RNA polymerase] + ATP = phospho-[DNA-directed RNA polymerase] + ADP + H(+). Catalytic subunit of the CTDK-I complex, which hyperphosphorylates the C-terminal heptapeptide repeat domain (CTD) of the largest RNA polymerase II subunit. CTDK-I phosphorylates 'Ser-5' if the CTD substrate is not phosphorylated at 'Ser-5', but will phosphorylate 'Ser-2' of a CTD substrate if 'Ser-5' is already phosphorylated. CTDK-I is also more reactive toward substrates that are prephosphorylated at 'Ser-2' or 'Ser-5' compared with an unphosphorylated CTD substrate, therefore efficiently creating doubly phosphorylated CTD repeats. Involved in RNA polymerase II transcriptional elongation, and through PTI1, pre-mRNA 3'-end processing. Participates in both positive and negative regulation of CTD phosphorylation. Required for DNA damage induced transcription, including the expression of the RNR genes, and reprogramming of gene expression upon amino acid starvation. Required for SET2 mediated H3K36 methylation. Also regulates H3K4 methylation. Controls the maintenance of suppressive chromatin in the coding regions of genes by both promoting H3K36 methylation, which leads to histone deacetylation, and catalyzing phosphorylation of the CTD required to localize H3K4 chromatin modification specifically to the 5' ends of genes, thereby creating a boundary for H3K4 methylation that prevents a mark associated with transcriptional initiation from spreading into the bodies of genes. Involved in RNA polymerase I transcription. Involved in telomere maintenance. Acts together with SNF1 to induce GSY2 transcription in response to glucose limitation. Involved in the adaptation to alternative carbon sources, including galactose, glycerol and ethanol, but not raffinose. Required for the integrity of the rDNA locus. Functions in translation elongation by enhancing decoding fidelity. Needed for translational accuracy by phosphorylating RPS2. In Saccharomyces cerevisiae (strain ATCC 204508 / S288c) (Baker's yeast), this protein is CTD kinase subunit alpha (CTK1).